The chain runs to 346 residues: Phosphoribosylformylglycinamidine cyclo-ligase (346 aa).

The protein belongs to the AIR synthase family.

The protein localises to the cytoplasm. The catalysed reaction is 2-formamido-N(1)-(5-O-phospho-beta-D-ribosyl)acetamidine + ATP = 5-amino-1-(5-phospho-beta-D-ribosyl)imidazole + ADP + phosphate + H(+). The protein operates within purine metabolism; IMP biosynthesis via de novo pathway; 5-amino-1-(5-phospho-D-ribosyl)imidazole from N(2)-formyl-N(1)-(5-phospho-D-ribosyl)glycinamide: step 2/2. The polypeptide is Phosphoribosylformylglycinamidine cyclo-ligase (Colwellia psychrerythraea (strain 34H / ATCC BAA-681) (Vibrio psychroerythus)).